The primary structure comprises 133 residues: Exosome complex protein C1739.07 (133 aa).

Residues 96-133 (VNPKTEAVNTSNAAISSSSSNRPKVAKDAATRIIKHHT) are disordered. The segment covering 102–116 (AVNTSNAAISSSSSN) has biased composition (low complexity).

The protein belongs to the C1D family. Component of the exosome multienzyme ribonuclease complex. Interacts with cut3.

The protein resides in the cytoplasm. It localises to the nucleus. Required for exosome-dependent processing of pre-rRNA and small nucleolar RNA (snRNA) precursors. Involved in processing of 35S pre-rRNA at the A0, A1 and A2 sites. The protein is Exosome complex protein C1739.07 of Schizosaccharomyces pombe (strain 972 / ATCC 24843) (Fission yeast).